The sequence spans 486 residues: 2-hydroxymuconic semialdehyde dehydrogenase (486 aa).

Active-site residues include Glu254 and Cys288.

Belongs to the aldehyde dehydrogenase family.

It catalyses the reaction (2Z,4E)-2-hydroxy-6-oxohexa-2,4-dienoate + NAD(+) + H2O = (2Z,4E)-2-hydroxyhexa-2,4-dienedioate + NADH + 2 H(+). The protein operates within aromatic compound metabolism; benzoate degradation via hydroxylation. 2-hydroxymuconic acid semialdehyde can be converted to 2-hydroxypent-2,4-dienoate either directly by the action of 2-hydroxymuconic semialdehyde hydrolase (HMSH) or by the action of three sequential enzymes, the first of which is HMSD. This Pseudomonas sp. (strain CF600) protein is 2-hydroxymuconic semialdehyde dehydrogenase (dmpC).